Here is a 502-residue protein sequence, read N- to C-terminus: ATP synthase subunit alpha (502 aa).

169 to 176 contacts ATP; that stretch reads GDRQTGKT.

This sequence belongs to the ATPase alpha/beta chains family. F-type ATPases have 2 components, CF(1) - the catalytic core - and CF(0) - the membrane proton channel. CF(1) has five subunits: alpha(3), beta(3), gamma(1), delta(1), epsilon(1). CF(0) has three main subunits: a(1), b(2) and c(9-12). The alpha and beta chains form an alternating ring which encloses part of the gamma chain. CF(1) is attached to CF(0) by a central stalk formed by the gamma and epsilon chains, while a peripheral stalk is formed by the delta and b chains.

The protein localises to the cell membrane. The enzyme catalyses ATP + H2O + 4 H(+)(in) = ADP + phosphate + 5 H(+)(out). Its function is as follows. Produces ATP from ADP in the presence of a proton gradient across the membrane. The alpha chain is a regulatory subunit. This is ATP synthase subunit alpha from Desulfitobacterium hafniense (strain DSM 10664 / DCB-2).